The following is a 242-amino-acid chain: 7-cyano-7-deazaguanine synthase (242 aa).

12–22 (FSGGQDSATCL) contributes to the ATP binding site. Residues Cys-200, Cys-215, Cys-218, and Cys-221 each coordinate Zn(2+).

Belongs to the QueC family. It depends on Zn(2+) as a cofactor.

It catalyses the reaction 7-carboxy-7-deazaguanine + NH4(+) + ATP = 7-cyano-7-deazaguanine + ADP + phosphate + H2O + H(+). Its pathway is purine metabolism; 7-cyano-7-deazaguanine biosynthesis. Its function is as follows. Catalyzes the ATP-dependent conversion of 7-carboxy-7-deazaguanine (CDG) to 7-cyano-7-deazaguanine (preQ(0)). The protein is 7-cyano-7-deazaguanine synthase of Gluconobacter oxydans (strain 621H) (Gluconobacter suboxydans).